The primary structure comprises 504 residues: ATP synthase subunit alpha (504 aa).

Residue 169 to 176 participates in ATP binding; sequence GDRQTGKT.

Belongs to the ATPase alpha/beta chains family. F-type ATPases have 2 components, CF(1) - the catalytic core - and CF(0) - the membrane proton channel. CF(1) has five subunits: alpha(3), beta(3), gamma(1), delta(1), epsilon(1). CF(0) has three main subunits: a(1), b(2) and c(9-12). The alpha and beta chains form an alternating ring which encloses part of the gamma chain. CF(1) is attached to CF(0) by a central stalk formed by the gamma and epsilon chains, while a peripheral stalk is formed by the delta and b chains.

It localises to the cell membrane. It carries out the reaction ATP + H2O + 4 H(+)(in) = ADP + phosphate + 5 H(+)(out). Produces ATP from ADP in the presence of a proton gradient across the membrane. The alpha chain is a regulatory subunit. The chain is ATP synthase subunit alpha from Clostridium botulinum (strain Langeland / NCTC 10281 / Type F).